The following is a 73-amino-acid chain: Tetrahydromethanopterin S-methyltransferase subunit G (73 aa).

A helical transmembrane segment spans residues Ile-48 to Ser-68.

Belongs to the MtrG family. In terms of assembly, the complex is composed of 8 subunits; MtrA, MtrB, MtrC, MtrD, MtrE, MtrF, MtrG and MtrH.

Its subcellular location is the cell membrane. The enzyme catalyses 5-methyl-5,6,7,8-tetrahydromethanopterin + coenzyme M + 2 Na(+)(in) = 5,6,7,8-tetrahydromethanopterin + methyl-coenzyme M + 2 Na(+)(out). Its pathway is one-carbon metabolism; methanogenesis from CO(2); methyl-coenzyme M from 5,10-methylene-5,6,7,8-tetrahydromethanopterin: step 2/2. Functionally, part of a complex that catalyzes the formation of methyl-coenzyme M and tetrahydromethanopterin from coenzyme M and methyl-tetrahydromethanopterin. This is an energy-conserving, sodium-ion translocating step. This chain is Tetrahydromethanopterin S-methyltransferase subunit G, found in Methanosarcina acetivorans (strain ATCC 35395 / DSM 2834 / JCM 12185 / C2A).